The sequence spans 518 residues: Myosin-binding protein 7 (518 aa).

One can recognise a GTD-binding domain in the interval 69 to 167 (NELELLRETV…ALTFEAQAYK (99 aa)). The interval 276–350 (VVGQSPRHQR…DSSEIGDNDM (75 aa)) is disordered. Positions 291–301 (STGSASSLLGT) are enriched in low complexity. A compositionally biased stretch (polar residues) spans 310 to 320 (SNDSPRSNNGS). A Phosphoserine modification is found at Ser385. A coiled-coil region spans residues 399–431 (EISKLYMRLQALEADRESMRQAIMSMRTEKAQM). The helical transmembrane segment at 458–477 (IIGAFNFISVFKWITSFVFW) threads the bilayer.

As to quaternary structure, interacts with myosin XI-I.

It localises to the endomembrane system. Membrane-anchored myosin receptors that define a distinct, plant-specific transport vesicle compartment. This is Myosin-binding protein 7 from Arabidopsis thaliana (Mouse-ear cress).